The primary structure comprises 220 residues: 5'(3')-deoxyribonucleotidase, mitochondrial (220 aa).

A mitochondrion-targeting transit peptide spans Met1–Ala23. Residue Asp33 is the Nucleophile of the active site. 2 residues coordinate Mg(2+): Asp33 and Asp35. The active-site Proton donor is Asp35. Substrate-binding residues include Asp35, Phe41, Phe67, Trp68, Val69, Trp88, Thr122, and Lys157. Asp168 contacts Mg(2+).

The protein belongs to the 5'(3')-deoxyribonucleotidase family. Homodimer. It depends on Mg(2+) as a cofactor.

It localises to the mitochondrion. Its function is as follows. Dephosphorylates specifically the 5' and 2'(3')-phosphates of uracil and thymine deoxyribonucleotides, and so protects mitochondrial DNA replication from excess dTTP. Has only marginal activity towards dIMP and dGMP. The polypeptide is 5'(3')-deoxyribonucleotidase, mitochondrial (Nt5m) (Mus musculus (Mouse)).